The following is a 121-amino-acid chain: Peptidyl-tRNA hydrolase (121 aa).

It belongs to the PTH2 family.

It localises to the cytoplasm. It carries out the reaction an N-acyl-L-alpha-aminoacyl-tRNA + H2O = an N-acyl-L-amino acid + a tRNA + H(+). Its function is as follows. The natural substrate for this enzyme may be peptidyl-tRNAs which drop off the ribosome during protein synthesis. The sequence is that of Peptidyl-tRNA hydrolase from Staphylothermus marinus (strain ATCC 43588 / DSM 3639 / JCM 9404 / F1).